Here is a 1017-residue protein sequence, read N- to C-terminus: Voltage-gated delayed rectifier potassium channel KCNH4 (1017 aa).

Topologically, residues 1–228 are cytoplasmic; sequence MPVMKGLLAP…LLHYSVSKAI (228 aa). A PAS domain is found at 14-90; sequence FLDTIATRFD…QRLHKALEGH (77 aa). Residues 93 to 145 form the PAC domain; that stretch reads HRAEICFYRKDGSAFWCLLDMMPIKNEMGEVVLFLFSFKDITQSGSPGLGPQG. The tract at residues 138–157 is disordered; the sequence is SPGLGPQGGRGDSNHENSLG. Residues 139-148 are compositionally biased toward gly residues; it reads PGLGPQGGRG. A helical transmembrane segment spans residues 229–249; the sequence is WDGLILLATFYVAVTVPYNVC. Residues 250-259 are Extracellular-facing; that stretch reads FSGDDDTPIT. A helical transmembrane segment spans residues 260–280; the sequence is SRHTLVSDIAVEMLFILDIIL. Residues 281-302 lie on the Cytoplasmic side of the membrane; the sequence is NFRTTYVSQSGQVISAPRSIGL. A helical transmembrane segment spans residues 303–323; sequence HYLATWFFIDLIAALPFDLLY. Over 324–332 the chain is Extracellular; the sequence is IFNITVTSL. Asn326 carries N-linked (GlcNAc...) asparagine glycosylation. The helical; Voltage-sensor transmembrane segment at 333-353 threads the bilayer; the sequence is VHLLKTVRLLRLLRLLQKLER. The Cytoplasmic segment spans residues 354–361; sequence YSQCSAVV. A helical membrane pass occupies residues 362-382; the sequence is LTLLMSVFALLAHWMACIWYV. The Extracellular portion of the chain corresponds to 383–427; the sequence is IGRREMEANDPLLWDIGWLHELGKRLEVPYVNGSVGGPSRRSAYI. N-linked (GlcNAc...) asparagine glycosylation occurs at Asn414. An intramembrane region (pore-forming) is located at residues 428–448; sequence AALYFTLSSLTSVGFGNVCAN. The Selectivity filter signature appears at 439–444; that stretch reads SVGFGN. The Extracellular portion of the chain corresponds to 449-482; that stretch reads TDAEKIFSICTMLIGALMHAVVFGNVTAIIQRMY. Asn473 carries N-linked (GlcNAc...) asparagine glycosylation. The chain crosses the membrane as a helical span at residues 483-503; it reads SRRSLYHSRMKDLKDFIRVHR. At 504–1017 the chain is on the cytoplasmic side; sequence LPRPLKQRML…SFQSRSDTFH (514 aa). The segment at 556-620 is cNMP-binding domain; sequence LFGAASRGCL…AILGKGDLIG (65 aa). Residues 691-724 show a composition bias toward polar residues; the sequence is GSDTSGLSRFSRSPRLSQPRSESLGSSSDKTLPS. Disordered stretches follow at residues 691–749, 772–803, 821–875, and 971–1017; these read GSDT…LPNL, LVSSPSLSPSLSPALAGQGHSASPHGPPRCSA, PDLS…EAEE, and LLDL…DTFH. Residues 772–787 are compositionally biased toward low complexity; sequence LVSSPSLSPSLSPALA. The segment covering 978–1002 has biased composition (pro residues); sequence ILPPYPSEPDPLGPSPVPEASPPTP. Over residues 1008-1017 the composition is skewed to polar residues; the sequence is SFQSRSDTFH.

This sequence belongs to the potassium channel family. H (Eag) (TC 1.A.1.20) subfamily. Kv12.3/KCNH4 sub-subfamily. As to quaternary structure, the potassium channel is probably composed of a homo- or heterotetrameric complex of pore-forming alpha subunits that can associate with modulating beta subunits. As to expression, detected only in brain, in particular in the telencephalon. Detected in putamen and caudate nucleus, and at lower levels in cerebral cortex, occipital and hippocampus.

Its subcellular location is the membrane. The enzyme catalyses K(+)(in) = K(+)(out). Functionally, pore-forming (alpha) subunit of a voltage-gated delayed rectifier. Activates at more negative voltages, exhibits fast prepulse-independent activation kinetics and deactivates much more slowly, but shows no inactivation. The polypeptide is Voltage-gated delayed rectifier potassium channel KCNH4 (Homo sapiens (Human)).